A 565-amino-acid chain; its full sequence is Periplasmic trehalase (565 aa).

The first 30 residues, 1 to 30 (MKSPAPSRPQKMALIPACIFLCFAALSVQA), serve as a signal peptide directing secretion. Substrate contacts are provided by residues R152, 159-160 (WD), N196, 205-207 (RSQ), 277-279 (RPE), and G310. Catalysis depends on proton donor/acceptor residues D312 and E496. E511 provides a ligand contact to substrate. Residues 538–565 (PCDNVPATRPTVKSATTQPSTKEAQPTP) are disordered. Over residues 548–565 (TVKSATTQPSTKEAQPTP) the composition is skewed to polar residues.

The protein belongs to the glycosyl hydrolase 37 family. In terms of assembly, monomer.

It localises to the periplasm. The catalysed reaction is alpha,alpha-trehalose + H2O = alpha-D-glucose + beta-D-glucose. In terms of biological role, provides the cells with the ability to utilize trehalose at high osmolarity by splitting it into glucose molecules that can subsequently be taken up by the phosphotransferase-mediated uptake system. In Escherichia coli O8 (strain IAI1), this protein is Periplasmic trehalase.